The primary structure comprises 628 residues: Translation factor GUF1, mitochondrial (628 aa).

The tr-type G domain maps to 27–209; sequence LPSRNFSIIA…AIISRIPPPS (183 aa). GTP is bound by residues 36–43, 102–106, and 156–159; these read AHIDHGKS, DTPGH, and NKID.

It belongs to the TRAFAC class translation factor GTPase superfamily. Classic translation factor GTPase family. LepA subfamily.

It localises to the mitochondrion inner membrane. It catalyses the reaction GTP + H2O = GDP + phosphate + H(+). Functionally, promotes mitochondrial protein synthesis. May act as a fidelity factor of the translation reaction, by catalyzing a one-codon backward translocation of tRNAs on improperly translocated ribosomes. Binds to mitochondrial ribosomes in a GTP-dependent manner. The protein is Translation factor GUF1, mitochondrial of Laccaria bicolor (strain S238N-H82 / ATCC MYA-4686) (Bicoloured deceiver).